The sequence spans 195 residues: ATP-dependent Clp protease proteolytic subunit (195 aa).

Serine 96 (nucleophile) is an active-site residue. Histidine 121 is a catalytic residue.

It belongs to the peptidase S14 family. As to quaternary structure, fourteen ClpP subunits assemble into 2 heptameric rings which stack back to back to give a disk-like structure with a central cavity, resembling the structure of eukaryotic proteasomes.

The protein localises to the cytoplasm. It catalyses the reaction Hydrolysis of proteins to small peptides in the presence of ATP and magnesium. alpha-casein is the usual test substrate. In the absence of ATP, only oligopeptides shorter than five residues are hydrolyzed (such as succinyl-Leu-Tyr-|-NHMec, and Leu-Tyr-Leu-|-Tyr-Trp, in which cleavage of the -Tyr-|-Leu- and -Tyr-|-Trp bonds also occurs).. Its function is as follows. Cleaves peptides in various proteins in a process that requires ATP hydrolysis. Has a chymotrypsin-like activity. Plays a major role in the degradation of misfolded proteins. The protein is ATP-dependent Clp protease proteolytic subunit of Elusimicrobium minutum (strain Pei191).